The sequence spans 48 residues: uncharacterized protein (48 aa).

This is an uncharacterized protein from Escherichia coli (Bacteriophage HK022).